The sequence spans 175 residues: Adenine phosphoribosyltransferase (175 aa).

The protein belongs to the purine/pyrimidine phosphoribosyltransferase family. Homodimer.

The protein resides in the cytoplasm. The catalysed reaction is AMP + diphosphate = 5-phospho-alpha-D-ribose 1-diphosphate + adenine. It functions in the pathway purine metabolism; AMP biosynthesis via salvage pathway; AMP from adenine: step 1/1. In terms of biological role, catalyzes a salvage reaction resulting in the formation of AMP, that is energically less costly than de novo synthesis. The sequence is that of Adenine phosphoribosyltransferase from Lactobacillus johnsonii (strain CNCM I-12250 / La1 / NCC 533).